The following is a 376-amino-acid chain: Chorismate synthase (376 aa).

Residues Arg-39 and Arg-45 each coordinate NADP(+). FMN-binding positions include 115–117 (RSS), Gly-276, 291–295 (KPIPT), and Arg-317.

This sequence belongs to the chorismate synthase family. Homotetramer. FMNH2 serves as cofactor.

It catalyses the reaction 5-O-(1-carboxyvinyl)-3-phosphoshikimate = chorismate + phosphate. Its pathway is metabolic intermediate biosynthesis; chorismate biosynthesis; chorismate from D-erythrose 4-phosphate and phosphoenolpyruvate: step 7/7. Catalyzes the anti-1,4-elimination of the C-3 phosphate and the C-6 proR hydrogen from 5-enolpyruvylshikimate-3-phosphate (EPSP) to yield chorismate, which is the branch point compound that serves as the starting substrate for the three terminal pathways of aromatic amino acid biosynthesis. This reaction introduces a second double bond into the aromatic ring system. The protein is Chorismate synthase of Thermotoga maritima (strain ATCC 43589 / DSM 3109 / JCM 10099 / NBRC 100826 / MSB8).